Here is a 214-residue protein sequence, read N- to C-terminus: Octanoyltransferase (214 aa).

A BPL/LPL catalytic domain is found at 29 to 214 (STTPDEIWIL…EHLQKQLMPT (186 aa)). Substrate-binding positions include 69 to 76 (RGGEITYH), 146 to 148 (ALG), and 159 to 161 (GLA). Cysteine 177 serves as the catalytic Acyl-thioester intermediate.

This sequence belongs to the LipB family.

The protein localises to the cytoplasm. The enzyme catalyses octanoyl-[ACP] + L-lysyl-[protein] = N(6)-octanoyl-L-lysyl-[protein] + holo-[ACP] + H(+). The protein operates within protein modification; protein lipoylation via endogenous pathway; protein N(6)-(lipoyl)lysine from octanoyl-[acyl-carrier-protein]: step 1/2. Catalyzes the transfer of endogenously produced octanoic acid from octanoyl-acyl-carrier-protein onto the lipoyl domains of lipoate-dependent enzymes. Lipoyl-ACP can also act as a substrate although octanoyl-ACP is likely to be the physiological substrate. In Polynucleobacter asymbioticus (strain DSM 18221 / CIP 109841 / QLW-P1DMWA-1) (Polynucleobacter necessarius subsp. asymbioticus), this protein is Octanoyltransferase.